A 348-amino-acid polypeptide reads, in one-letter code: Sensor protein VraS (348 aa).

Transmembrane regions (helical) follow at residues 13–33 (ILVY…VNII) and 43–63 (IFGI…CIIV). A Histidine kinase domain is found at 150 to 341 (RLARELHDSV…RIEVKAPLNK (192 aa)).

Its subcellular location is the cell membrane. It carries out the reaction ATP + protein L-histidine = ADP + protein N-phospho-L-histidine.. Member of the two-component regulatory system VraS/VraR involved in the control of the cell wall peptidoglycan biosynthesis. Probably activates VraR by phosphorylation. The polypeptide is Sensor protein VraS (vraS) (Staphylococcus epidermidis (strain ATCC 35984 / DSM 28319 / BCRC 17069 / CCUG 31568 / BM 3577 / RP62A)).